A 357-amino-acid chain; its full sequence is Isopentenyl-diphosphate delta-isomerase (357 aa).

6 to 7 (RK) provides a ligand contact to substrate. FMN contacts are provided by residues Ser62, 63–65 (AMT), Ser93, and Asn122. 93 to 95 (SQR) contributes to the substrate binding site. Gln156 serves as a coordination point for substrate. Glu157 contacts Mg(2+). FMN contacts are provided by residues Lys186, Thr216, 267–269 (GVR), and 288–289 (AL).

It belongs to the IPP isomerase type 2 family. In terms of assembly, homooctamer. Dimer of tetramers. FMN is required as a cofactor. The cofactor is NADPH. Mg(2+) serves as cofactor.

The protein resides in the cytoplasm. The catalysed reaction is isopentenyl diphosphate = dimethylallyl diphosphate. In terms of biological role, involved in the biosynthesis of isoprenoids. Catalyzes the 1,3-allylic rearrangement of the homoallylic substrate isopentenyl (IPP) to its allylic isomer, dimethylallyl diphosphate (DMAPP). This Methanothrix thermoacetophila (strain DSM 6194 / JCM 14653 / NBRC 101360 / PT) (Methanosaeta thermophila) protein is Isopentenyl-diphosphate delta-isomerase.